The sequence spans 1088 residues: MIDSSKKQQQGFPEILTAGDFEPLKEKECLEGSNQKSLKEVLQLRLQQRRTREQLVDQGIMPPLKSPAAFHEQIKSLERARTENFLKHKIRSRPDRSELVRMHILEETFAEPSLQATQMKLKRARLADDLNEKIAQRPGPMELVEKNILPVDSSVKEAIIGVGKEDYPHTQGDFSFDEDSSDALSPDQPASQESQGSAASPSEPKVSESPSPVTTNTPAQFASVSPTVPEFLKTPPTADQPPPRPAAPVLPTNTVSSAKPGPALVKQSHPKNPNDKHRSKKCKDPKPRVKKLKYHQYIPPDQKGEKNEPQMDSNYARLLQQQQLFLQLQILSQQKQHYNYQTILPAPFKPLNDKNSNSGNSALNNATPNTPRQNTSTPVRKPGPLPSSLDDLKVSELKTELKLRGLPVSGTKPDLIERLKPYQEVNSSGLAAGGIVAVSSSAIVTSNPEVTVALPVTTLHNTVTSSVSTLKAELPPTGTSNATRVENVHSPLPISPSPSEQSSLSTDDTNMADTFTEIMTMMSPSQFLSSSPLRMTNNEDSLSPTSSTLSNLELDAAEKDRKLQEKEKQIEELKRKLEQEQKLVEVLKMQLEVEKRGQQQRPLEAQPSAPGHSVKSDQKHGSLGSSIKDEASLPDCSSSRQPIPVASHAVGQPVSTGGQTLVAKKAVVIKQEVPVGQAEQQSVVSQFYVSSQGQPPPAVVAQPQALLTTQTAQLLLPVSIQGSSVTSVQLPVGSLKLQTSPQAGMQTQPQIATAAQIPTAALASGLAPTVPQTQDTFPQHVLSQPQQVRKVFTNSASSNTVLPYQRHPAPAVQQPFINKASNSVLQSRNAPLPSLQNGPNTPNKPSSPPPPQQFVVQHSLFGSPVAKTKDPPRYEEAIKQTRSTQAPLPEISNAHSQQMDDLFDILIKSGEISLPIKEEPSPISKMRPVTASITTMPVNTVVSRPPPQVQMAPPVSLEPMGSLSASLENQLEAFLDGTLPSANEIPPLQSSSEDREPFSLIEDLQNDLLSHSGMLDHSHSPMETSETQFAAGTPCLSLDLSDSNLDNMEWLDITMPNSSSGLTPLSTTAPSMFSADFLDPQDLPLPWD.

Glutamate 22 is modified (phosphoserine). The stretch at 40 to 65 is one RPEL 1 repeat; the sequence is EVLQLRLQQRRTREQLVDQGIMPPLK. Residue serine 66 is modified to Phosphoserine. RPEL repeat units follow at residues 84–109 and 128–153; these read NFLKHKIRSRPDRSELVRMHILEETF and DDLNEKIAQRPGPMELVEKNILPVDS. Disordered stretches follow at residues 165 to 310, 349 to 389, 472 to 508, and 528 to 553; these read EDYP…NEPQ, KPLN…PSSL, AELPPTGTSNATRVENVHSPLPISPSPSEQSSLSTDD, and LSSSPLRMTNNEDSLSPTSSTLSNLE. The segment covering 197–213 has biased composition (low complexity); sequence SAASPSEPKVSESPSPV. Residues 214–226 are compositionally biased toward polar residues; that stretch reads TTNTPAQFASVSP. Pro residues predominate over residues 238 to 248; it reads ADQPPPRPAAP. Positions 272–287 are enriched in basic and acidic residues; it reads NPNDKHRSKKCKDPKP. Residues 355–366 show a composition bias toward low complexity; that stretch reads NSNSGNSALNNA. Phosphothreonine is present on residues threonine 367 and threonine 370. Positions 367-378 are enriched in polar residues; the sequence is TPNTPRQNTSTP. Residues 389–423 form the SAP domain; sequence LDDLKVSELKTELKLRGLPVSGTKPDLIERLKPYQ. Positions 528–540 are enriched in polar residues; sequence LSSSPLRMTNNED. 2 positions are modified to phosphoserine: serine 541 and serine 543. Residues 541 to 550 show a composition bias toward low complexity; that stretch reads SLSPTSSTLS. Residues 545–601 are a coiled coil; it reads TSSTLSNLELDAAEKDRKLQEKEKQIEELKRKLEQEQKLVEVLKMQLEVEKRGQQQR. The interval 563 to 591 is required for interaction with itself and with MRTFA; sequence LQEKEKQIEELKRKLEQEQKLVEVLKMQL. 2 disordered regions span residues 595–655 and 829–886; these read KRGQ…QPVS and NAPL…STQA. Residue lysine 628 forms a Glycyl lysine isopeptide (Lys-Gly) (interchain with G-Cter in SUMO1) linkage. The segment covering 829–838 has biased composition (polar residues); sequence NAPLPSLQNG. Residues 867 to 879 show a composition bias toward basic and acidic residues; sequence KTKDPPRYEEAIK. Serine 921 carries the post-translational modification Phosphoserine.

In terms of assembly, interacts with MRTFA and SRF. In terms of processing, O-glycosylated.

The protein localises to the nucleus. In terms of biological role, acts as a transcriptional coactivator of serum response factor (SRF). Required for skeletal myogenic differentiation. This chain is Myocardin-related transcription factor B, found in Homo sapiens (Human).